The chain runs to 435 residues: GTPase Der (435 aa).

2 consecutive EngA-type G domains span residues 4–167 and 175–350; these read PVVA…PAEK and ISFS…DNQN. Residues 10–17, 57–61, 119–122, 181–188, 228–232, and 293–296 contribute to the GTP site; these read GQPNVGKS, DTGGI, NKAD, GRPNVGKS, DTAGI, and NKWD. Residues 351-435 enclose the KH-like domain; the sequence is QRIQSSVLND…PIKILPRKRK (85 aa).

Belongs to the TRAFAC class TrmE-Era-EngA-EngB-Septin-like GTPase superfamily. EngA (Der) GTPase family. As to quaternary structure, associates with the 50S ribosomal subunit.

GTPase that plays an essential role in the late steps of ribosome biogenesis. This is GTPase Der from Lactobacillus helveticus (strain DPC 4571).